We begin with the raw amino-acid sequence, 249 residues long: Triosephosphate isomerase (249 aa).

9 to 11 (NWK) serves as a coordination point for substrate. Catalysis depends on histidine 94, which acts as the Electrophile. The active-site Proton acceptor is glutamate 166. Residues glycine 172, serine 211, and 232–233 (GG) each bind substrate.

The protein belongs to the triosephosphate isomerase family. In terms of assembly, homodimer.

The protein localises to the cytoplasm. The enzyme catalyses D-glyceraldehyde 3-phosphate = dihydroxyacetone phosphate. The protein operates within carbohydrate biosynthesis; gluconeogenesis. It functions in the pathway carbohydrate degradation; glycolysis; D-glyceraldehyde 3-phosphate from glycerone phosphate: step 1/1. Functionally, involved in the gluconeogenesis. Catalyzes stereospecifically the conversion of dihydroxyacetone phosphate (DHAP) to D-glyceraldehyde-3-phosphate (G3P). This chain is Triosephosphate isomerase, found in Dechloromonas aromatica (strain RCB).